The following is a 107-amino-acid chain: Thioredoxin-1 (107 aa).

The 105-residue stretch at 2 to 106 (ASVRTMNDYH…LTNMMAKLVK (105 aa)) folds into the Thioredoxin domain. Active-site nucleophile residues include Cys-31 and Cys-34. Cys-31 and Cys-34 form a disulfide bridge.

It belongs to the thioredoxin family. Ovary specific. Expressed present in the nurse cells from stage 9 of ovary development and is transported into the oocyte. Expressed throughout oogenesis.

Its subcellular location is the nucleus. Participates in various redox reactions through the reversible oxidation of its active center dithiol to a disulfide and catalyzes dithiol-disulfide exchange reactions. As a reducing substrate of peroxiredoxin 1, thioredoxin 2 is preferred over thioredoxin 1. Required for female meiosis and early embryonic development. This chain is Thioredoxin-1 (dhd), found in Drosophila melanogaster (Fruit fly).